The following is a 138-amino-acid chain: Small ribosomal subunit protein uS11c (138 aa).

The disordered stretch occupies residues 1–23 (MAKPILRIGSRKNTRSGSRKNVR). Residues 9-23 (GSRKNTRSGSRKNVR) show a composition bias toward basic residues.

This sequence belongs to the universal ribosomal protein uS11 family. Part of the 30S ribosomal subunit.

Its subcellular location is the plastid. It is found in the chloroplast. This chain is Small ribosomal subunit protein uS11c, found in Barbarea verna (Land cress).